Consider the following 387-residue polypeptide: Glutamate N-acetyltransferase (387 aa).

Residues Thr140, Lys162, Thr173, Glu257, Asn382, and Thr387 each coordinate substrate. Thr173 (nucleophile) is an active-site residue.

It belongs to the ArgJ family. As to quaternary structure, heterotetramer of two alpha and two beta chains.

The protein localises to the cytoplasm. The catalysed reaction is N(2)-acetyl-L-ornithine + L-glutamate = N-acetyl-L-glutamate + L-ornithine. Its pathway is amino-acid biosynthesis; L-arginine biosynthesis; L-ornithine and N-acetyl-L-glutamate from L-glutamate and N(2)-acetyl-L-ornithine (cyclic): step 1/1. Functionally, catalyzes the transfer of the acetyl group from N(2)-acetylornithine to glutamate, forming N-acetylglutamate and L-ornithine. The polypeptide is Glutamate N-acetyltransferase (Methanopyrus kandleri (strain AV19 / DSM 6324 / JCM 9639 / NBRC 100938)).